The chain runs to 150 residues: C-type lectin mosGCTL-7 (150 aa).

The N-terminal stretch at 1 to 17 (MQLVHVLVVLLSVVAHA) is a signal peptide. Residues 18–140 (KKFFIPNLKA…CRGFKAYIVC (123 aa)) enclose the C-type lectin domain. The N-linked (GlcNAc...) asparagine glycan is linked to asparagine 67. Cysteine 111 and cysteine 131 are disulfide-bonded.

As to quaternary structure, interacts with putative receptor-type tyrosine-protein phosphatase mosPTP-1; the interaction probably mediates the recruitment of Japanese encephalitis virus particles in complex with C-type lectin mosGCTL-7 to the cell surface. (Microbial infection) Interacts with envelope protein E (glycosylated) of Japanese encephalitis virus in a calcium-dependent manner.

The protein resides in the secreted. In terms of biological role, carbohydrate-binding protein. Its function is as follows. (Microbial infection) Facilitates Japanese encephalitis virus infection in mosquitoes probably via capturing viral particles and presenting them to a ligand on the cell surface, thereby facilitating viral entry. The polypeptide is C-type lectin mosGCTL-7 (Aedes aegypti (Yellowfever mosquito)).